The following is a 439-amino-acid chain: GTPase Der (439 aa).

2 consecutive EngA-type G domains span residues 4 to 168 (PIVA…KDDE) and 177 to 352 (INIA…DNYT). GTP-binding positions include 10 to 17 (GRPNVGKS), 57 to 61 (DTGGI), 120 to 123 (NKID), 183 to 190 (GKPNVGKS), 230 to 234 (DTAGL), and 295 to 298 (NKWD). One can recognise a KH-like domain in the interval 353-437 (KRVKTGVLND…GIKLEFRERK (85 aa)).

Belongs to the TRAFAC class TrmE-Era-EngA-EngB-Septin-like GTPase superfamily. EngA (Der) GTPase family. As to quaternary structure, associates with the 50S ribosomal subunit.

In terms of biological role, GTPase that plays an essential role in the late steps of ribosome biogenesis. The polypeptide is GTPase Der (Clostridium botulinum (strain Okra / Type B1)).